Here is a 428-residue protein sequence, read N- to C-terminus: Tyrosine--tRNA ligase (428 aa).

L-tyrosine is bound at residue Tyr37. The 'HIGH' region signature appears at 42-51 (PTGSSLHAGH). The L-tyrosine site is built by Tyr175 and Gln179. Positions 235 to 239 (KFGKS) match the 'KMSKS' region motif. Lys238 provides a ligand contact to ATP. Residues 358 to 415 (ATILDLLVESGLEKSKGAARRTVGEGGAYVNNQRIEDIEWSPSAEELLHGSWLVLRKG) form the S4 RNA-binding domain.

It belongs to the class-I aminoacyl-tRNA synthetase family. TyrS type 1 subfamily. Homodimer.

It localises to the cytoplasm. The catalysed reaction is tRNA(Tyr) + L-tyrosine + ATP = L-tyrosyl-tRNA(Tyr) + AMP + diphosphate + H(+). Functionally, catalyzes the attachment of tyrosine to tRNA(Tyr) in a two-step reaction: tyrosine is first activated by ATP to form Tyr-AMP and then transferred to the acceptor end of tRNA(Tyr). The chain is Tyrosine--tRNA ligase from Corynebacterium jeikeium (strain K411).